The primary structure comprises 44 residues: Mu-conotoxin-like Cal 12.1.2h (44 aa).

4 disulfide bridges follow: cysteine 3/cysteine 16, cysteine 11/cysteine 28, cysteine 18/cysteine 33, and cysteine 27/cysteine 38. Residue tryptophan 17 is modified to 6'-bromotryptophan. At proline 23 the chain carries 4-hydroxyproline. Tryptophan 36 and tryptophan 37 each carry 6'-bromotryptophan. Position 39 is a 4-hydroxyproline (proline 39). Tryptophan 43 is subject to 6'-bromotryptophan.

In terms of tissue distribution, expressed by the venom duct.

The protein localises to the secreted. Its function is as follows. Mu-conotoxins block voltage-gated sodium channels. This toxin reversibly blocks voltage-gated sodium channel in cephalopods, with no alteration in the voltage dependence of sodium conductance or on the kinetics of inactivation. The sequence is that of Mu-conotoxin-like Cal 12.1.2h from Californiconus californicus (California cone).